The chain runs to 370 residues: Dihydroorotate dehydrogenase (370 aa).

Residues Lys82, 135 to 139 (NSFGM), and Asn200 contribute to the substrate site. 82-83 (KT) is a binding site for FMN. Residue Asn200 participates in FMN binding. Cys203 acts as the Nucleophile in catalysis. FMN-binding residues include Lys241 and Ile269. 270–271 (NT) is a substrate binding site. FMN is bound by residues Gly297, 328–329 (GG), and 350–351 (AT).

It belongs to the dihydroorotate dehydrogenase family. The cofactor is FMN.

It catalyses the reaction (S)-dihydroorotate + A = orotate + AH2. The protein operates within pyrimidine metabolism; UMP biosynthesis via de novo pathway. In terms of biological role, catalyzes the conversion of dihydroorotate to orotate. Participates in the pyrimidine biosynthetic pathway. The sequence is that of Dihydroorotate dehydrogenase (pyr4) from Dictyostelium discoideum (Social amoeba).